Here is an 893-residue protein sequence, read N- to C-terminus: cGMP-specific 3',5'-cyclic phosphodiesterase (893 aa).

GAF domains lie at 21-173 and 205-390; these read DIDV…GIGI and NLEC…GLGI. In terms of domain architecture, PDEase spans 420-743; sequence GQDQTEKLIQ…RNWQDLAEKV (324 aa). Histidine 496 (proton donor) is an active-site residue. 4 residues coordinate a divalent metal cation: histidine 500, histidine 536, aspartate 537, and aspartate 647. 2 disordered regions span residues 784–807 and 844–893; these read QQSQ…RLSI and HVSE…CALL. Basic and acidic residues-rich tracts occupy residues 789 to 800 and 844 to 853; these read GGDDSHTPEHQR and HVSEDMDDKS. Residues 864–880 are compositionally biased toward low complexity; the sequence is SVGRMSASSSTSSAGTV. Basic residues predominate over residues 883 to 893; the sequence is SKKRSKLCALL. Cysteine methyl ester is present on cysteine 890. Cysteine 890 carries S-farnesyl cysteine lipidation. A propeptide spans 891–893 (removed in mature form); sequence ALL.

It belongs to the cyclic nucleotide phosphodiesterase family. In terms of assembly, interacts with PrBP. A divalent metal cation serves as cofactor.

Its subcellular location is the cell membrane. It catalyses the reaction 3',5'-cyclic GMP + H2O = GMP + H(+). Its function is as follows. Has a role regulating cGMP transport in Malpighian tubule principal cells. This Drosophila virilis (Fruit fly) protein is cGMP-specific 3',5'-cyclic phosphodiesterase.